Reading from the N-terminus, the 335-residue chain is Phospholipid scramblase 1 (335 aa).

The proline-rich domain (PRD) stretch occupies residues 1–101 (MEKHGPPEHA…NHPGGPGGTP (101 aa)). The tract at residues 1 to 102 (MEKHGPPEHA…HPGGPGGTPW (102 aa)) is disordered. Residues 1-305 (MEKHGPPEHA…IQFPLDLDVK (305 aa)) lie on the Cytoplasmic side of the membrane. 6 tandem repeats follow at residues 23–29 (QGPYPGP), 30–36 (QGPYPGP), 37–43 (QGPYAGP), 44–50 (QGPYPGP), 51–57 (QGPYAGP), and 58–64 (QGPYPGP). The tract at residues 23–71 (QGPYPGPQGPYPGPQGPYAGPQGPYPGPQGPYAGPQGPYPGPQPGYPVP) is 7 X 7 AA tandem repeats of Q-G-P-Y-[AP]-G-P. Residues 26–37 (YPGPQGPYPGPQ) are compositionally biased toward pro residues. Pro residues predominate over residues 59 to 72 (GPYPGPQPGYPVPP). Residues 64–72 (PQPGYPVPP) carry the SH3-binding 1 motif. A 7; approximate repeat occupies 65–71 (QPGYPVP). A Phosphotyrosine; by ABL modification is found at Tyr91. The SH3-binding 2 signature appears at 101–109 (PWMQAPPPP). Phosphothreonine; by PKC/PRKCD is present on Thr178. Residues Cys201, Cys202, Cys205, and Cys206 are each lipidated (S-palmitoyl cysteine). The short motif at 274–283 (GKISKQWSGF) is the Nuclear localization signal element. Residues 306-322 (MKAVMLGACFLIDFMFF) form a helical membrane-spanning segment. Residues 323–335 (ERTGNEEQRSGVW) are Extracellular-facing.

The protein belongs to the phospholipid scramblase family. Forms homooligomers in the presence of calcium. Interacts with ABL. Interacts with RELT, RELL1 and RELL2. Interacts with OXSR1 in the presence of RELT. Interacts with OCLN, TOP2A and TOP2B. Interacts with TRPC1, TRPC4 and TRPC5. Interacts with ILDR1. It depends on Ca(2+) as a cofactor. Mg(2+) serves as cofactor. The cofactor is Zn(2+). In terms of processing, phosphorylated on tyrosine residues. Phosphorylated by OXSR1 in the presence of RELT. Phosphorylation at Thr-178 by PKC/PKCD increases its phospholipid scramblase activity during both cell stimulation and apoptosis. Post-translationally, palmitoylation is required for its phospholipid scramblase activity. Palmitoylation regulates its localization to the cell membrane or the nucleus; trafficking to the cell membrane is dependent upon palmitoylation whereas in the absence of palmitoylation, localizes to the nucleus.

The protein resides in the cell membrane. It localises to the nucleus. Its subcellular location is the cytoplasm. It is found in the perinuclear region. The enzyme catalyses a 1,2-diacyl-sn-glycero-3-phosphocholine(in) = a 1,2-diacyl-sn-glycero-3-phosphocholine(out). It carries out the reaction a 1,2-diacyl-sn-glycero-3-phosphoethanolamine(in) = a 1,2-diacyl-sn-glycero-3-phosphoethanolamine(out). The catalysed reaction is a 1,2-diacyl-sn-glycero-3-phospho-L-serine(in) = a 1,2-diacyl-sn-glycero-3-phospho-L-serine(out). Catalyzes calcium-induced ATP-independent rapid bidirectional and non-specific distribution of phospholipids (lipid scrambling or lipid flip-flop) between the inner and outer leaflet of the plasma membrane resulting in collapse of the phospholipid asymmetry which leads to phosphatidylserine externalization on the cell surface. Mediates calcium-dependent phosphatidylserine externalization and apoptosis in neurons via its association with TRPC5. Also exhibits magnesium-dependent nuclease activity against double-stranded DNA and RNA but not single-stranded DNA and can enhance DNA decatenation mediated by TOP2A. Negatively regulates FcR-mediated phagocytosis in differentiated macrophages. May contribute to cytokine-regulated cell proliferation and differentiation. The protein is Phospholipid scramblase 1 (Plscr1) of Rattus norvegicus (Rat).